A 651-amino-acid polypeptide reads, in one-letter code: Acetyl-coenzyme A synthetase (651 aa).

Residues 190–193 (RGGK), T312, and N336 each bind CoA. ATP is bound by residues 388–390 (GEP), 412–417 (DTWWQT), D501, and R516. S524 lines the CoA pocket. R527 lines the ATP pocket. Residues V538, H540, and V543 each coordinate Mg(2+). R585 contacts CoA. Position 610 is an N6-acetyllysine (K610).

It belongs to the ATP-dependent AMP-binding enzyme family. Mg(2+) serves as cofactor. In terms of processing, acetylated. Deacetylation by the SIR2-homolog deacetylase activates the enzyme.

It catalyses the reaction acetate + ATP + CoA = acetyl-CoA + AMP + diphosphate. Functionally, catalyzes the conversion of acetate into acetyl-CoA (AcCoA), an essential intermediate at the junction of anabolic and catabolic pathways. AcsA undergoes a two-step reaction. In the first half reaction, AcsA combines acetate with ATP to form acetyl-adenylate (AcAMP) intermediate. In the second half reaction, it can then transfer the acetyl group from AcAMP to the sulfhydryl group of CoA, forming the product AcCoA. This Mesorhizobium japonicum (strain LMG 29417 / CECT 9101 / MAFF 303099) (Mesorhizobium loti (strain MAFF 303099)) protein is Acetyl-coenzyme A synthetase.